The primary structure comprises 89 residues: Large ribosomal subunit protein bL28 (89 aa).

This sequence belongs to the bacterial ribosomal protein bL28 family.

The sequence is that of Large ribosomal subunit protein bL28 from Chlamydia pneumoniae (Chlamydophila pneumoniae).